Consider the following 611-residue polypeptide: Leukotriene A-4 hydrolase (611 aa).

Position 73 is an N6-acetyllysine (Lys73). Residues 135 to 137 (QCQ) and 267 to 272 (PYGGME) each bind a peptide. Zn(2+) is bound at residue His296. Catalysis depends on Glu297, which acts as the Proton acceptor. Residues His300 and Glu319 each coordinate Zn(2+). Residue Lys337 is modified to N6-acetyllysine. Tyr384 acts as the Proton donor in catalysis. The residue at position 414 (Lys414) is an N6-acetyllysine. Position 416 is a phosphoserine (Ser416). A peptide is bound at residue 564–566 (RMK). Position 573 is an N6-acetyllysine (Lys573).

Belongs to the peptidase M1 family. As to quaternary structure, monomer. Zn(2+) serves as cofactor. In terms of processing, phosphorylation at Ser-416 inhibits leukotriene-A4 hydrolase activity.

The protein localises to the cytoplasm. The catalysed reaction is leukotriene A4 + H2O = leukotriene B4. It catalyses the reaction (5S,6S)-epoxy-(18R)-hydroxy-(7E,9E,11Z,14Z,16E)-eicosapentaenoate + H2O = resolvin E1. It carries out the reaction (5S,6S)-epoxy-(18S)-hydroxy-(7E,9E,11Z,14Z,16E)-eicosapentaenoate + H2O = 18S-resolvin E1. The enzyme catalyses Release of the N-terminal residue from a tripeptide.. Its pathway is lipid metabolism; leukotriene B4 biosynthesis. Its activity is regulated as follows. Inhibited by bestatin. Inhibited by captopril. The epoxide hydrolase activity is restrained by suicide inactivation that involves binding of LTA4 to Tyr-379. 4-(4-benzylphenyl)thiazol-2-amine (ARM1) selectively inhibits the epoxide hydrolase activity. Its function is as follows. Bifunctional zinc metalloenzyme that comprises both epoxide hydrolase (EH) and aminopeptidase activities. Acts as an epoxide hydrolase to catalyze the conversion of LTA4 to the pro-inflammatory mediator leukotriene B4 (LTB4). Also has aminopeptidase activity, with high affinity for N-terminal arginines of various synthetic tripeptides. In addition to its pro-inflammatory EH activity, may also counteract inflammation by its aminopeptidase activity, which inactivates by cleavage another neutrophil attractant, the tripeptide Pro-Gly-Pro (PGP), a bioactive fragment of collagen generated by the action of matrix metalloproteinase-9 (MMP9) and prolylendopeptidase (PREPL). Involved also in the biosynthesis of resolvin E1 and 18S-resolvin E1 from eicosapentaenoic acid, two lipid mediators that show potent anti-inflammatory and pro-resolving actions. This chain is Leukotriene A-4 hydrolase (Lta4h), found in Rattus norvegicus (Rat).